We begin with the raw amino-acid sequence, 188 residues long: Probable DNA-directed RNA polymerase subunit delta (188 aa).

The 68-residue stretch at 14 to 81 (LSMIEVAHAL…GNNVWALRSW (68 aa)) folds into the HTH HARE-type domain. Positions 96-188 (EIEDEEEEEK…EDDSDDTDED (93 aa)) are disordered. Composition is skewed to acidic residues over residues 118–150 (IEDE…EDKD) and 158–188 (ELAE…TDED).

The protein belongs to the RpoE family. In terms of assembly, RNAP is composed of a core of 2 alpha, a beta and a beta' subunits. The core is associated with a delta subunit and one of several sigma factors.

Participates in both the initiation and recycling phases of transcription. In the presence of the delta subunit, RNAP displays an increased specificity of transcription, a decreased affinity for nucleic acids, and an increased efficiency of RNA synthesis because of enhanced recycling. This is Probable DNA-directed RNA polymerase subunit delta from Lactococcus lactis subsp. cremoris (strain MG1363).